We begin with the raw amino-acid sequence, 206 residues long: Large ribosomal subunit protein uL4 (206 aa).

The span at threonine 48–glycine 59 shows a compositional bias: basic and acidic residues. The interval threonine 48–serine 77 is disordered. Basic residues predominate over residues glycine 60 to serine 77.

This sequence belongs to the universal ribosomal protein uL4 family. Part of the 50S ribosomal subunit.

One of the primary rRNA binding proteins, this protein initially binds near the 5'-end of the 23S rRNA. It is important during the early stages of 50S assembly. It makes multiple contacts with different domains of the 23S rRNA in the assembled 50S subunit and ribosome. Functionally, forms part of the polypeptide exit tunnel. This is Large ribosomal subunit protein uL4 from Pelotomaculum thermopropionicum (strain DSM 13744 / JCM 10971 / SI).